Reading from the N-terminus, the 198-residue chain is Large ribosomal subunit protein bL12m (198 aa).

A mitochondrion-targeting transit peptide spans Met-1 to His-36. N6-acetyllysine occurs at positions 125, 138, 142, and 144. Lys-150 bears the N6-acetyllysine; alternate mark. Lys-150 carries the post-translational modification N6-succinyllysine; alternate. A Glycyl lysine isopeptide (Lys-Gly) (interchain with G-Cter in ubiquitin) cross-link involves residue Lys-150. N6-succinyllysine is present on Lys-162. Residues Lys-163 and Lys-173 each carry the N6-acetyllysine modification. Position 178 is an N6-acetyllysine; alternate (Lys-178). Position 178 is an N6-succinyllysine; alternate (Lys-178). Lys-185 bears the N6-acetyllysine mark.

It belongs to the bacterial ribosomal protein bL12 family. As to quaternary structure, component of the mitochondrial large ribosomal subunit (mt-LSU). Mature mammalian 55S mitochondrial ribosomes consist of a small (28S) and a large (39S) subunit. The 28S small subunit contains a 12S ribosomal RNA (12S mt-rRNA) and 30 different proteins. The 39S large subunit contains a 16S rRNA (16S mt-rRNA), a copy of mitochondrial valine transfer RNA (mt-tRNA(Val)), which plays an integral structural role, and 52 different proteins. bL12m interacts with NOA1. Two mature forms are produced by differential two-step proteolytic cleavage. Cleaved by the mitochondrial processing protease to produce the long mature form and subsequently by the mitochondrial intermediate protease to produce the short mature form. Post-translationally, in the presence of CUL3, undergoes 'Lys-63'-linked ubiquitination at Lys-150 which results in proteasomal degradation.

The protein resides in the mitochondrion matrix. In terms of biological role, as a component of the mitochondrial large ribosomal subunit, plays a role in mitochondrial translation. When present in mitochondria as a free protein not associated with the ribosome, associates with mitochondrial RNA polymerase POLRMT to activate transcription. Required for POLRMT stability. In Homo sapiens (Human), this protein is Large ribosomal subunit protein bL12m (MRPL12).